The sequence spans 310 residues: N-acetyl-gamma-glutamyl-phosphate reductase (310 aa).

Cys-117 is a catalytic residue.

It belongs to the NAGSA dehydrogenase family. Type 2 subfamily.

The protein resides in the cytoplasm. It catalyses the reaction N-acetyl-L-glutamate 5-semialdehyde + phosphate + NADP(+) = N-acetyl-L-glutamyl 5-phosphate + NADPH + H(+). Its pathway is amino-acid biosynthesis; L-arginine biosynthesis; N(2)-acetyl-L-ornithine from L-glutamate: step 3/4. Functionally, catalyzes the NADPH-dependent reduction of N-acetyl-5-glutamyl phosphate to yield N-acetyl-L-glutamate 5-semialdehyde. The sequence is that of N-acetyl-gamma-glutamyl-phosphate reductase from Rhizobium etli (strain CIAT 652).